The primary structure comprises 465 residues: MESLRIYNTLARDKQVFVPRQSGEVRMYVCGITVYDYCHVGHARMLVVFDLVQRWLRAIGYRVTYVRNITDIDDKIIRRALENGETIKSLTDRFIGAMHEDEAALGIQRPDIEPRATQFIPQMLGMIEKLETNGYAYQAADGDVNYSVRKFANYGKLSGKSLDDLRAGERVAANDAKEDPLDFVLWKRAKADDPQGASWASKYGMGRPGWHIECSAMGCTLLGEHFDIHGGGQDLQFPHHENEIAQSEGATGQTFVNYWMHNGFVQVDNEKMSKSLGNFFTIREVLERYDAEVMRFFIVRTHYRSPLNYSDVHLDDARASLTRLYTALKDVQPDALALDWNEPHAQRFAAAMNDDINTPVAVATLFELAGEVNRTCDASLARQLKQLAGLLGLLGREPRAFLQQATGAAQAGGLAADEIEAKIAARVAAKQAKDYAEADRIRAELLDAGIALEDKPGGSTEWRRV.

Cys-30 lines the Zn(2+) pocket. The 'HIGH' region signature appears at 32 to 42; that stretch reads ITVYDYCHVGH. Zn(2+) is bound by residues Cys-214, His-239, and Glu-243. A 'KMSKS' region motif is present at residues 271-275; sequence KMSKS. Lys-274 lines the ATP pocket.

It belongs to the class-I aminoacyl-tRNA synthetase family. Monomer. Zn(2+) serves as cofactor.

It is found in the cytoplasm. It carries out the reaction tRNA(Cys) + L-cysteine + ATP = L-cysteinyl-tRNA(Cys) + AMP + diphosphate. This Burkholderia ambifaria (strain MC40-6) protein is Cysteine--tRNA ligase.